The chain runs to 496 residues: MGVHGLLPIIRKVASEGIRWLQPEFFSKYYPVLAVDGNLLLYRFFRSPNTPLHTNYQHVLWALKLSRYCRKLKTSPIVVFDNLKPNDFKAEEHEKRSLISSQIVNQRQVVQEQMYFLCNLKNCLIDNNFPTGNFYYEIGPLLSQIGKLLFDLRSLNERDNPFHAQNNAENLENATFVRLIVDKLNDREKTLMIQEKKNHLIHSLRQLLAFSEINDFPSEIRSYLEFILSNLDLECLTLCLKIIKGILTLDELQKAIKLKQTELDKLERRLYRPSPQNIFEIFEILKILGIPASFSPIGVEAEAFASAISQNNLAYAVATQDTDVLLLGSSMISNFLDLNDNFHLPLQIMDPRKIAQELNLTFDGFQDYCLMCGTDFTSRIPKIGPVRALKLIRYYGNAFDVLKALNVEEKYIIPTDYIKKFLTAKKLFTDLPSNNELFSFIHNIPKEFLHLSDSTYLDLEKQVLRIFNVQIEELDAKTPWYYHYELEKDVKSTYEY.

Positions 36, 81, 300, 302, 321, 323, and 375 each coordinate Mg(2+).

Belongs to the XPG/RAD2 endonuclease family. FEN1 subfamily. The cofactor is Mg(2+).

This is an uncharacterized protein from Schizosaccharomyces pombe (strain 972 / ATCC 24843) (Fission yeast).